The primary structure comprises 30 residues: Cycloviolacin-O10 (30 aa).

The cyclopeptide (Gly-Asn) cross-link spans Gly1–Asn30. Cystine bridges form between Cys4-Cys20, Cys8-Cys22, and Cys13-Cys27.

In terms of processing, this is a cyclic peptide. In terms of tissue distribution, expressed in petals and roots but not in leaves, petioles and runners (at protein level).

Its function is as follows. Probably participates in a plant defense mechanism. This is Cycloviolacin-O10 from Viola odorata (Sweet violet).